The following is a 654-amino-acid chain: RNA polymerase I-specific transcription initiation factor tif-1A (654 aa).

The disordered stretch occupies residues 1-37 (MKRSTANAPKLSPKHESESDPKKVKLEEEAKPTVNQA). Residues 13-31 (PKHESESDPKKVKLEEEAK) are compositionally biased toward basic and acidic residues.

The protein belongs to the RRN3 family.

It localises to the nucleus. Its subcellular location is the nucleolus. Its function is as follows. Required for efficient transcription initiation by RNA polymerase I (Pol I). The chain is RNA polymerase I-specific transcription initiation factor tif-1A from Caenorhabditis elegans.